A 203-amino-acid polypeptide reads, in one-letter code: CASP-like protein 2U5 (203 aa).

At 1–31 (MSEHRIPVAADKQISPPISAGEQKGCKGLKR) the chain is on the cytoplasmic side. Residues 32–52 (TDLMLRFAAFVCCAVTMVVLI) form a helical membrane-spanning segment. The Extracellular segment spans residues 53–84 (TDKQTSAIQVPGFNNLTITKTVSFDLAKAFVY). A glycan (N-linked (GlcNAc...) asparagine) is linked at Asn-67. The chain crosses the membrane as a helical span at residues 85 to 105 (LVSAAGIGAGYTLLVLVLSII). The Cytoplasmic segment spans residues 106 to 111 (SAERSK). A helical transmembrane segment spans residues 112-132 (AIAWFIFVFDQLITYVLLAAA). Residues 133–164 (AASTEVAYMGAHAPPEASWLKVCSLFGRFCHQ) lie on the Extracellular side of the membrane. The helical transmembrane segment at 165–185 (LGASLVTSFISTVLFAFSAAI) threads the bilayer. Over 186-203 (SAYYLFSNTNVRPAYSKG) the chain is Cytoplasmic.

It belongs to the Casparian strip membrane proteins (CASP) family. Homodimer and heterodimers.

The protein localises to the cell membrane. The protein is CASP-like protein 2U5 of Selaginella moellendorffii (Spikemoss).